Consider the following 499-residue polypeptide: Putative antiporter subunit mnhD2 (499 aa).

The next 14 helical transmembrane spans lie at 3–23 (LSNLLILPMLLPFLCALILVF), 33–53 (YLYLGTMTITTIISLMLLIYV), 79–99 (LSLIMVTTASFVITLIMAYGF), 109–129 (YHLPSFILFLSVGVIGSFLTS), 131–151 (LFNLYVMFEIMLLASFVLITL), 162–182 (IIYVVLNIIGSWLFLLGIGLL), 210–230 (ISLIFLVAFSAKAALVLFMWL), 241–261 (LAALFAALMTKVGAYALIRFF), 272–292 (IHPLLATMAAITMVIGAIGVI), 309–329 (IGFIILGLGTNTFAGINGAIF), 331–351 (LVNDIVVKTLLFFIIGSLVYI), 370–390 (FGVAFIIMIFAIGGVPPFSGF), 404–424 (GNYIGLALMIITSLIAMYSLF), and 452–472 (ILSILVVVVIAIGIAAPVVLN).

This sequence belongs to the CPA3 antiporters (TC 2.A.63) subunit D family. In terms of assembly, may form a heterooligomeric complex that consists of seven subunits: mnhA2, mnhB2, mnhC2, mnhD2, mnhE2, mnhF2 and mnhG2.

The protein localises to the cell membrane. Its function is as follows. Expression of the mnh2 operon in E.coli is not able to catalyze Na(+)Li(+)/H(+) antiport. It does however confer higher growth rates than the control strain at up to pH 9.5. The operon may encode an NADH-ubiquinone oxidoreductase. The sequence is that of Putative antiporter subunit mnhD2 (mnhD2) from Staphylococcus aureus.